Here is a 191-residue protein sequence, read N- to C-terminus: Signal peptidase IB (191 aa).

The Cytoplasmic segment spans residues 1-7 (MKKELLE). A helical membrane pass occupies residues 8–28 (WIISIAVAFVILFIVGKFIVT). At 29-191 (PYTIKGESMD…YNFNPENTKN (163 aa)) the chain is on the extracellular side. Active-site residues include S36 and K77.

This sequence belongs to the peptidase S26 family.

The protein localises to the cell membrane. It carries out the reaction Cleavage of hydrophobic, N-terminal signal or leader sequences from secreted and periplasmic proteins.. Essential for cell viability. The chain is Signal peptidase IB (spsB) from Staphylococcus aureus (strain MRSA252).